Reading from the N-terminus, the 89-residue chain is Small ribosomal subunit protein uS17A (89 aa).

The protein belongs to the universal ribosomal protein uS17 family. In terms of assembly, part of the 30S ribosomal subunit.

In terms of biological role, one of the primary rRNA binding proteins, it binds specifically to the 5'-end of 16S ribosomal RNA. The protein is Small ribosomal subunit protein uS17A of Bacteroides thetaiotaomicron (strain ATCC 29148 / DSM 2079 / JCM 5827 / CCUG 10774 / NCTC 10582 / VPI-5482 / E50).